The chain runs to 412 residues: 2,3-bisphosphoglycerate-independent phosphoglycerate mutase (412 aa).

This sequence belongs to the BPG-independent phosphoglycerate mutase family. A-PGAM subfamily.

It catalyses the reaction (2R)-2-phosphoglycerate = (2R)-3-phosphoglycerate. The protein operates within carbohydrate degradation; glycolysis; pyruvate from D-glyceraldehyde 3-phosphate: step 3/5. Catalyzes the interconversion of 2-phosphoglycerate and 3-phosphoglycerate. In Methanobrevibacter smithii (strain ATCC 35061 / DSM 861 / OCM 144 / PS), this protein is 2,3-bisphosphoglycerate-independent phosphoglycerate mutase.